A 120-amino-acid chain; its full sequence is Large ribosomal subunit protein uL14 (120 aa).

Belongs to the universal ribosomal protein uL14 family. Part of the 50S ribosomal subunit. Forms a cluster with proteins L3 and L19. In the 70S ribosome, L14 and L19 interact and together make contacts with the 16S rRNA in bridges B5 and B8.

Binds to 23S rRNA. Forms part of two intersubunit bridges in the 70S ribosome. The protein is Large ribosomal subunit protein uL14 of Phytoplasma australiense.